A 517-amino-acid chain; its full sequence is Crotonobetaine/carnitine--CoA ligase (517 aa).

This sequence belongs to the ATP-dependent AMP-binding enzyme family.

It carries out the reaction 4-(trimethylamino)butanoate + ATP + CoA = 4-(trimethylamino)butanoyl-CoA + AMP + diphosphate. It catalyses the reaction crotonobetaine + ATP + CoA = crotonobetainyl-CoA + AMP + diphosphate. The enzyme catalyses (R)-carnitine + ATP + CoA = (R)-carnitinyl-CoA + AMP + diphosphate. It functions in the pathway amine and polyamine metabolism; carnitine metabolism. Catalyzes the transfer of CoA to carnitine, generating the initial carnitinyl-CoA needed for the CaiB reaction cycle. Also has activity toward crotonobetaine and gamma-butyrobetaine. In Shigella sonnei (strain Ss046), this protein is Crotonobetaine/carnitine--CoA ligase.